Here is a 570-residue protein sequence, read N- to C-terminus: Hydroxylamine reductase (570 aa).

Positions 5, 8, 17, and 23 each coordinate [4Fe-4S] cluster. 8 residues coordinate hybrid [4Fe-2O-2S] cluster: H266, E290, C334, C425, C453, C478, E513, and K515. C425 bears the Cysteine persulfide mark.

This sequence belongs to the HCP family. Requires [4Fe-4S] cluster as cofactor. The cofactor is hybrid [4Fe-2O-2S] cluster.

The protein resides in the cytoplasm. It catalyses the reaction A + NH4(+) + H2O = hydroxylamine + AH2 + H(+). Catalyzes the reduction of hydroxylamine to form NH(3) and H(2)O. The protein is Hydroxylamine reductase of Clostridium botulinum (strain Loch Maree / Type A3).